The chain runs to 451 residues: UPF0761 membrane protein Hhal_0704 (451 aa).

The next 6 membrane-spanning stretches (helical) occupy residues 66 to 86 (LLAI…FPVF), 122 to 142 (ELTA…LNTI), 162 to 182 (FMVY…SVAS), 204 to 224 (LLNL…YSLV), 228 to 248 (SVPV…FELA), and 268 to 288 (ALAA…VILI).

This sequence belongs to the UPF0761 family.

The protein resides in the cell inner membrane. The chain is UPF0761 membrane protein Hhal_0704 from Halorhodospira halophila (strain DSM 244 / SL1) (Ectothiorhodospira halophila (strain DSM 244 / SL1)).